We begin with the raw amino-acid sequence, 107 residues long: MGNLMSLVLVALLFSLSLAVIADTSNDATHVKEEVKPSTEATDAIEAEVEVNDAVVEPQQGLPGGGCRFGCCGGYWWNGLCIYCCRSQAEANEVVKTVEPQKEEAKP.

Residues 1–19 (MGNLMSLVLVALLFSLSLA) form the signal peptide.

Functionally, may be involved in the acquisition of desiccation tolerance during late phase of embryogenesis. The protein is Late embryogenesis abundant protein M10 of Arabidopsis thaliana (Mouse-ear cress).